The sequence spans 319 residues: ATP-dependent 6-phosphofructokinase (319 aa).

G11 is a binding site for ATP. Position 21-25 (21-25 (RAVVR)) interacts with ADP. ATP contacts are provided by residues 72–73 (RC) and 102–105 (GDGS). D103 is a binding site for Mg(2+). 125-127 (TID) contacts substrate. The active-site Proton acceptor is the D127. R154 serves as a coordination point for ADP. Substrate contacts are provided by residues R162 and 169 to 171 (MGR). Residues 185–187 (GAE), R211, and 213–215 (KKH) each bind ADP. Residues E222, R243, and 249-252 (HVQR) each bind substrate.

This sequence belongs to the phosphofructokinase type A (PFKA) family. ATP-dependent PFK group I subfamily. Prokaryotic clade 'B1' sub-subfamily. As to quaternary structure, homotetramer. It depends on Mg(2+) as a cofactor.

The protein localises to the cytoplasm. The catalysed reaction is beta-D-fructose 6-phosphate + ATP = beta-D-fructose 1,6-bisphosphate + ADP + H(+). Its pathway is carbohydrate degradation; glycolysis; D-glyceraldehyde 3-phosphate and glycerone phosphate from D-glucose: step 3/4. Its activity is regulated as follows. Allosterically activated by ADP and other diphosphonucleosides, and allosterically inhibited by phosphoenolpyruvate. In terms of biological role, catalyzes the phosphorylation of D-fructose 6-phosphate to fructose 1,6-bisphosphate by ATP, the first committing step of glycolysis. This is ATP-dependent 6-phosphofructokinase from Bacillus cytotoxicus (strain DSM 22905 / CIP 110041 / 391-98 / NVH 391-98).